Consider the following 392-residue polypeptide: Sex-determining region Y protein (392 aa).

The segment at 4–81 is sufficient for interaction with KPNB1; the sequence is HVKRPMNAFM…YKYQPHRRAK (78 aa). A DNA-binding region (HMG box) is located at residues 5-73; the sequence is VKRPMNAFMV…LHREKYPNYK (69 aa). Required for nuclear localization regions lie at residues 6 to 22 and 75 to 81; these read KRPMNAFMVWSRGERHK and QPHRRAK. The tract at residues 52-84 is sufficient for interaction with EP300; that stretch reads RPFFQEAQRLKILHREKYPNYKYQPHRRAKVSQ. Lys81 is subject to N6-acetyllysine. The interval 92–144 is necessary for interaction with ZNF208 isoform KRAB-O; the sequence is AVASTKLYNLLQWDRNPHAITYRQDWSRAAHLYSKNQQSFYWQPVDIPTGHLQ. Positions 94–138 are necessary for interaction with SLC9A3R2 and nuclear accumulation of SLC9A3R2; it reads ASTKLYNLLQWDRNPHAITYRQDWSRAAHLYSKNQQSFYWQPVDI. The interval 142 to 361 is disordered; the sequence is HLQQQQQQQQ…QQQQQQQQQQ (220 aa). Positions 144–181 are enriched in low complexity; sequence QQQQQQQQQQQFHNHHQQQQQFYDHHQQQQQQQQQQQQ. 2 stretches are compositionally biased toward basic and acidic residues: residues 182 to 197 and 210 to 228; these read FHDHHQQKQQFHDHHQ and QEQQFHDHHQQQQQFHDHQ. The segment covering 229–238 has biased composition (low complexity); sequence QQQQQQQQQQ. Basic and acidic residues-rich tracts occupy residues 239 to 250, 261 to 295, and 313 to 349; these read FHDHHQQKQQFH, FHDHQQQQQQFHDHQQQQHQFHDHPQQKQQFHDHP, and QFHDHHQQKQQFHDHHQQKQQFHDHHQQQQQFHDHHQ. Positions 350–361 are enriched in low complexity; it reads QQQQQQQQQQQQ.

This sequence belongs to the SRY family. Interacts with KPNB1, ZNF208 isoform KRAB-O, PARP1 and SLC9A3R2. The interaction with KPNB1 is sensitive to dissociation by Ran in the GTP-bound form. Interaction with PARP1 impaired its DNA-binding activity. Interacts with CALM, EP300, HDAC3 and WT1. The interaction with EP300 modulates its DNA-binding activity. Post-translationally, degraded due to the presence of a degron at the C-terminus that promotes its degradation. In terms of processing, phosphorylated on serine residues by PKA. Phosphorylation by PKA enhances its DNA-binding activity and stimulates transcription repression. Acetylation of Lys-81 contributes to its nuclear localization and enhances its interaction with KPNB1. Post-translationally, poly-ADP-ribosylated by PARP1. ADP-ribosylation reduces its DNA-binding activity. Expressed in gonadal somatic pre-Sertoli cells. Expressed in the substantia nigra of the brain (at protein level). Expressed in diencephalon, cortex, the substantia nigra of the midbrain and the medial mammillary bodies of the hypothalamus of male, but not female. As to expression, expressed in gonadal somatic pre-Sertoli cells. While it is expressed at lower level compared to isoform Sry-S, this form is more stable and constitutes the predominant protein product of the Sry locus in XY gonads (at protein level).

The protein resides in the nucleus speckle. Its subcellular location is the cytoplasm. It localises to the nucleus. Its function is as follows. Transcriptional regulator that controls a genetic switch in male development. It is necessary and sufficient for initiating male sex determination by directing the development of supporting cell precursors (pre-Sertoli cells) as Sertoli rather than granulosa cells. Involved in different aspects of gene regulation including promoter activation or repression. Binds to the DNA consensus sequence 5'-[AT]AACAA[AT]-3'. SRY HMG box recognizes DNA by partial intercalation in the minor groove and promotes DNA bending. Also involved in pre-mRNA splicing. In male adult brain involved in the maintenance of motor functions of dopaminergic neurons. Constitutes the major isoform, which is necessary and sufficient for initiating male sex determination. In terms of biological role, constitutes a minor isoform, which is unstable due to the presence of a degron at the C-terminus that promotes its degradation. Not necessary and sufficient for initiating male sex determination. The chain is Sex-determining region Y protein from Mus musculus (Mouse).